Here is a 101-residue protein sequence, read N- to C-terminus: Small ribosomal subunit protein uS10 (101 aa).

This sequence belongs to the universal ribosomal protein uS10 family. In terms of assembly, part of the 30S ribosomal subunit.

Involved in the binding of tRNA to the ribosomes. This chain is Small ribosomal subunit protein uS10, found in Flavobacterium johnsoniae (strain ATCC 17061 / DSM 2064 / JCM 8514 / BCRC 14874 / CCUG 350202 / NBRC 14942 / NCIMB 11054 / UW101) (Cytophaga johnsonae).